The primary structure comprises 160 residues: Putative lipoprotein YfiB (160 aa).

The signal sequence occupies residues 1–18 (MIKHLVAPLVFTSLILTG). The N-palmitoyl cysteine moiety is linked to residue Cys19. Residue Cys19 is the site of S-diacylglycerol cysteine attachment. Residues 43-160 (AGDWSLGLSD…RRVAVVITTP (118 aa)) enclose the OmpA-like domain.

This sequence belongs to the outer membrane OOP (TC 1.B.6) superfamily.

It is found in the cell membrane. The polypeptide is Putative lipoprotein YfiB (yfiB) (Escherichia coli (strain K12)).